Here is a 177-residue protein sequence, read N- to C-terminus: Cytochrome c oxidase assembly protein CtaG (177 aa).

Residues 1–8 (MTQKAKNT) are Cytoplasmic-facing. A helical; Signal-anchor for type II membrane protein transmembrane segment spans residues 9 to 29 (IYLLILIILSMLCLVYASVPL). Over 30–177 (YSIFCKVTGY…TFFKYKENTK (148 aa)) the chain is Periplasmic.

The protein belongs to the COX11/CtaG family.

It is found in the cell inner membrane. In terms of biological role, exerts its effect at some terminal stage of cytochrome c oxidase synthesis, probably by being involved in the insertion of the copper B into subunit I. The polypeptide is Cytochrome c oxidase assembly protein CtaG (Ehrlichia ruminantium (strain Welgevonden)).